The chain runs to 902 residues: MEGGGKPNSASNSRDDGNSVYPSKAPATGPAAADKRLGTPPGGGAAGKEHGNSVCFKVDGGGGEEPAGSFEDAEGPRRQYGFMQRQFTSMLQPGVNKFSLRMFGSQKAVEKEQERVKTAGFWIIHPYSDFRFYWDLIMLIMMVGNLVIIPVGITFFTEQTTTPWIIFNVASDTVFLLDLIMNFRTGTVNEDSSEIILDPKVIKMNYLKSWFVVDFISSIPVDYIFLIVEKGMDSEVYKTARALRIVRFTKILSLLRLLRLSRLIRYIHQWEEIFHMTYDLASAVVRIFNLIGMMLLLCHWDGCLQFLVPLLQDFPPDCWVSLNEMVNDSWGKQYSYALFKAMSHMLCIGYGAQAPVSMSDLWITMLSMIVGATCYAMFVGHATALIQSLDSSRRQYQEKYKQVEQYMSFHKLPADMRQKIHDYYEHRYQGKIFDEENILSELNDPLREEIVNFNCRKLVATMPLFANADPNFVTAMLSKLRFEVFQPGDYIIREGAVGKKMYFIQHGVAGVITKSSKEMKLTDGSYFGEICLLTKGRRTASVRADTYCRLYSLSVDNFNEVLEEYPMMRRAFETVAIDRLDRIGKKNSILLQKFQKDLNTGVFNNQENEILKQIVKHDREMVQAIPPINYPQMTALNCTSSTTTPTSRMRTQSPPVYTATSLSHSNLHSPSPSTQTPQPSAILSPCSYTTAVCSPPIQSPLATRTFHYASPTASQLSLMQQPQPQLQQSQVQQTQPQPQPQPQQPQQQQQQQQQQQQQQQQQQQQQQPQTPGSSTPKNEVHKSTQALHNTNLTREVRPLSASQPSLPHEVSTMISRPHPTVGESLASIPQPMATVHSTGLQAGSRSTVPQRVTLFRQMSSGAIPPNRGVPPAPPPPAAVQRESPSVLNKDPDAEKPRFASNL.

Residues M1 to G75 form a disordered region. Over M1–R131 the chain is Cytoplasmic. The helical transmembrane segment at F132–I153 threads the bilayer. The Extracellular segment spans residues T154–T162. The chain crosses the membrane as a helical span at residues P163–F183. The Cytoplasmic portion of the chain corresponds to R184–M204. Residues N205 to F225 form a helical membrane-spanning segment. Topologically, residues L226 to T249 are extracellular. A helical; Voltage-sensor transmembrane segment spans residues K250 to W270. The Cytoplasmic segment spans residues E271–V284. A helical transmembrane segment spans residues V285–L307. Residues V308–Q333 are Extracellular-facing. N327 carries an N-linked (GlcNAc...) asparagine glycan. An intramembrane region (pore-forming) is located at residues Y334–P355. The Selectivity filter signature appears at C347–G351. Residues V356–D360 lie on the Extracellular side of the membrane. A helical transmembrane segment spans residues L361–H381. The Cytoplasmic segment spans residues A382–L902. 3',5'-cyclic AMP-binding residues include G528, E529, C531, R538, T539, R579, and R582. 3 disordered regions span residues T634 to A681, A713 to S824, and M858 to L902. 3 stretches are compositionally biased toward low complexity: residues T639–S680, Q720–P736, and Q744–Q769. The segment covering T770–T793 has biased composition (polar residues). Pro residues predominate over residues R867–A877. The segment covering K889–L902 has biased composition (basic and acidic residues).

This sequence belongs to the potassium channel HCN family. As to quaternary structure, homotetramer. Heterotetramer with HCN2. The potassium channel is composed of a homo- or heterotetrameric complex of pore-forming subunits. Interacts with KCNE2. Interacts with the SH3 domain of CSK. As to expression, highly expressed in cerebral cortex, cerebellum, throughout the hippocampus, in medial habenula, anterior dorsal nucleus in the thalamus, tenia tecta, several nuclei of the general motor system and in optic nerve layer. Detected in a subset of elongated cells in taste buds.

Its subcellular location is the cell membrane. The catalysed reaction is Na(+)(in) = Na(+)(out). The enzyme catalyses K(+)(in) = K(+)(out). Activated by cAMP, and at 10-100 times higher concentrations, also by cGMP. cAMP binding promotes tetramerization and formation of an active channel. Compared to other family members, cAMP has less stimulatory effect on HCN1 because part of the molecules already contain bound cAMP and form homotetramers when cAMP levels are low, this inherent tetramerization in HCN1 results in a weaker response to increased cAMP. Hyperpolarization-activated ion channel that are permeable to sodium and potassium ions. Exhibits weak selectivity for potassium over sodium ions. Contributes to the native pacemaker currents in heart (If) and in neurons (Ih). Participates in cerebellar mechanisms of motor learning. May mediate responses to sour stimuli. This is Potassium/sodium hyperpolarization-activated cyclic nucleotide-gated channel 1 (Hcn1) from Rattus norvegicus (Rat).